Reading from the N-terminus, the 434-residue chain is Enolase (434 aa).

The disordered stretch occupies residues 29–56 (SGHTGRAAVPSGASTGSREALEMRDGDK). Over residues 47–56 (EALEMRDGDK) the composition is skewed to basic and acidic residues. A (2R)-2-phosphoglycerate-binding site is contributed by Gln-163. The active-site Proton donor is Glu-205. Positions 242, 285, and 312 each coordinate Mg(2+). Residues Lys-337, Arg-366, Ser-367, and Lys-388 each contribute to the (2R)-2-phosphoglycerate site. Catalysis depends on Lys-337, which acts as the Proton acceptor.

This sequence belongs to the enolase family. In terms of assembly, homooctamer. It depends on Mg(2+) as a cofactor.

It is found in the cytoplasm. The protein localises to the secreted. The protein resides in the cell surface. The catalysed reaction is (2R)-2-phosphoglycerate = phosphoenolpyruvate + H2O. The protein operates within carbohydrate degradation; glycolysis; pyruvate from D-glyceraldehyde 3-phosphate: step 4/5. Catalyzes the reversible conversion of 2-phosphoglycerate (2-PG) into phosphoenolpyruvate (PEP). It is essential for the degradation of carbohydrates via glycolysis. In Nitratidesulfovibrio vulgaris (strain DSM 19637 / Miyazaki F) (Desulfovibrio vulgaris), this protein is Enolase.